Reading from the N-terminus, the 399-residue chain is Argininosuccinate synthase (399 aa).

ATP contacts are provided by residues 8–16 and A35; that span reads AYSGGLDTS. Y87 is a binding site for L-citrulline. Position 117 (G117) interacts with ATP. 3 residues coordinate L-aspartate: T119, N123, and D124. N123 provides a ligand contact to L-citrulline. R127, S176, S185, E261, and Y273 together coordinate L-citrulline.

Belongs to the argininosuccinate synthase family. Type 1 subfamily. Homotetramer.

It localises to the cytoplasm. It catalyses the reaction L-citrulline + L-aspartate + ATP = 2-(N(omega)-L-arginino)succinate + AMP + diphosphate + H(+). It participates in amino-acid biosynthesis; L-arginine biosynthesis; L-arginine from L-ornithine and carbamoyl phosphate: step 2/3. The chain is Argininosuccinate synthase from Buchnera aphidicola subsp. Cinara cedri (strain Cc).